Reading from the N-terminus, the 324-residue chain is NADH-ubiquinone oxidoreductase chain 1 (324 aa).

Helical transmembrane passes span 3–23 (LLFMYLLPLLYIAPILLAVAF), 73–93 (LLFILAPTLALALAMIMWTPF), 106–126 (ILFILAISSLTVYTILGSGWA), 151–171 (ALIILCSVLLAGGFTLSAFAI), 175–195 (FTWFILPLWPMFLMWFVSTLA), 226–246 (LFFLAEYANILMMNTLSTIIF), 255–275 (TLTTSLLMTKASILSLCFLWV), and 295–315 (FLPLTLALVILYVSMPISLLF).

This sequence belongs to the complex I subunit 1 family.

The protein resides in the mitochondrion inner membrane. The catalysed reaction is a ubiquinone + NADH + 5 H(+)(in) = a ubiquinol + NAD(+) + 4 H(+)(out). In terms of biological role, core subunit of the mitochondrial membrane respiratory chain NADH dehydrogenase (Complex I) that is believed to belong to the minimal assembly required for catalysis. Complex I functions in the transfer of electrons from NADH to the respiratory chain. The immediate electron acceptor for the enzyme is believed to be ubiquinone. This Aquarana catesbeiana (American bullfrog) protein is NADH-ubiquinone oxidoreductase chain 1 (MT-ND1).